The following is a 481-amino-acid chain: Threonine synthase (481 aa).

Lys118 carries the N6-(pyridoxal phosphate)lysine modification.

The protein belongs to the threonine synthase family. As to quaternary structure, monomer. Pyridoxal 5'-phosphate is required as a cofactor.

It catalyses the reaction O-phospho-L-homoserine + H2O = L-threonine + phosphate. Its pathway is amino-acid biosynthesis; L-threonine biosynthesis; L-threonine from L-aspartate: step 5/5. In terms of biological role, catalyzes the gamma-elimination of phosphate from L-phosphohomoserine and the beta-addition of water to produce L-threonine. The protein is Threonine synthase (thrC) of Corynebacterium glutamicum (strain ATCC 13032 / DSM 20300 / JCM 1318 / BCRC 11384 / CCUG 27702 / LMG 3730 / NBRC 12168 / NCIMB 10025 / NRRL B-2784 / 534).